The chain runs to 62 residues: Antitoxin VbhA (62 aa).

The Inhibitory (S/T)XXXE(G/N) motif signature appears at 20–25; sequence SQRLEG. Glu24 contributes to the ATP binding site.

As to quaternary structure, interacts with VbhT.

In terms of biological role, antitoxin component of type II toxin-antitoxin (TA) system VbhT-VbhA. Acts by inhibiting the adenylyltransferase activity of VbhT; competes with ATP-binding and prevents productive ATP-binding to VbhT. This chain is Antitoxin VbhA, found in Bartonella schoenbuchensis (strain DSM 13525 / NCTC 13165 / R1).